A 473-amino-acid chain; its full sequence is mRNA export factor ICP27 homolog (473 aa).

Disordered stretches follow at residues 57 to 81 (QELLTERPSPDSKNSQGDDDSNSIY) and 123 to 143 (QTKRPHGTGNRKQYHRRNFPM). Zn(2+) contacts are provided by Cys-362, His-438, Cys-442, and Cys-447. The CHC2-type zinc finger occupies 362-447 (CKYGTEKRSM…HTRRCSDPAC (86 aa)).

Belongs to the HHV-1 ICP27 protein family. Associates in a complex with RNA, and host export factors NXF1/TAP and ALYREF; these interactions allow nuclear export of viral transcripts.

It is found in the host cytoplasm. The protein resides in the host nucleus. Its function is as follows. Multifunctional regulator of the expression of viral genes that mediates nuclear export of viral intronless mRNAs. This immediate early (EI) protein promotes the nuclear export of viral intronless mRNAs by interacting with mRNAs and host NXF1/TAP. This Gallus gallus (Chicken) protein is mRNA export factor ICP27 homolog.